The sequence spans 84 residues: Tetrahydromethanopterin S-methyltransferase subunit G (84 aa).

The helical transmembrane segment at 50-70 (IGILYGLVIGIILSYILPALI) threads the bilayer.

It belongs to the MtrG family. The complex is composed of 8 subunits; MtrA, MtrB, MtrC, MtrD, MtrE, MtrF, MtrG and MtrH.

It localises to the cell membrane. The catalysed reaction is 5-methyl-5,6,7,8-tetrahydromethanopterin + coenzyme M + 2 Na(+)(in) = 5,6,7,8-tetrahydromethanopterin + methyl-coenzyme M + 2 Na(+)(out). It participates in one-carbon metabolism; methanogenesis from CO(2); methyl-coenzyme M from 5,10-methylene-5,6,7,8-tetrahydromethanopterin: step 2/2. Part of a complex that catalyzes the formation of methyl-coenzyme M and tetrahydromethanopterin from coenzyme M and methyl-tetrahydromethanopterin. This is an energy-conserving, sodium-ion translocating step. The polypeptide is Tetrahydromethanopterin S-methyltransferase subunit G (Methanocaldococcus jannaschii (strain ATCC 43067 / DSM 2661 / JAL-1 / JCM 10045 / NBRC 100440) (Methanococcus jannaschii)).